The chain runs to 127 residues: MKNDQKYDIKVQVRTTYLQDQSDPAQEQYVFAYTITINNIGSVASQLVSRHWIITGGDGETREVRGLGVVGEQPLLKPGESFEYTSGTAISSIAGSMKGSYQMVAEDGFHFSVEIPEFILSVPRVLH.

Residues 3–127 (NDQKYDIKVQ…FILSVPRVLH (125 aa)) form the ApaG domain.

The chain is Protein ApaG from Nitrosomonas eutropha (strain DSM 101675 / C91 / Nm57).